A 182-amino-acid chain; its full sequence is MQYIPLKEKYEKEIRNAMMKEFGYKNIHQVPRLEKIVINMGIGEGSRNKDVIDIHAKELALIAGQKPVVTRAKKSISNFKIRKGMPIGLKVTLRGLRMYNFLYKLINLVLPKVRDFRGLNPNGFDGRGNYSFGLTEQLVFPEISPDQVRRVQGMDIVIVTTAKTDEEARKLLELFGFPFKRQ.

Belongs to the universal ribosomal protein uL5 family. Part of the 50S ribosomal subunit; part of the 5S rRNA/L5/L18/L25 subcomplex. Contacts the 5S rRNA and the P site tRNA. Forms a bridge to the 30S subunit in the 70S ribosome.

In terms of biological role, this is one of the proteins that bind and probably mediate the attachment of the 5S RNA into the large ribosomal subunit, where it forms part of the central protuberance. In the 70S ribosome it contacts protein S13 of the 30S subunit (bridge B1b), connecting the 2 subunits; this bridge is implicated in subunit movement. Contacts the P site tRNA; the 5S rRNA and some of its associated proteins might help stabilize positioning of ribosome-bound tRNAs. This Thermosipho melanesiensis (strain DSM 12029 / CIP 104789 / BI429) protein is Large ribosomal subunit protein uL5.